We begin with the raw amino-acid sequence, 45 residues long: MLMSLFLAKLPAAYALFDPIVDILPIIPLFFLLLAFVWQAAIGFK.

The propeptide occupies 1 to 8 (MLMSLFLA). The helical transmembrane segment at 23 to 43 (ILPIIPLFFLLLAFVWQAAIG) threads the bilayer.

The protein belongs to the PsbK family. In terms of assembly, PSII is composed of 1 copy each of membrane proteins PsbA, PsbB, PsbC, PsbD, PsbE, PsbF, PsbH, PsbI, PsbJ, PsbK, PsbL, PsbM, PsbT, PsbX, PsbY, PsbZ, Psb30/Ycf12, at least 3 peripheral proteins of the oxygen-evolving complex and a large number of cofactors. It forms dimeric complexes.

The protein localises to the plastid. The protein resides in the cyanelle thylakoid membrane. Functionally, one of the components of the core complex of photosystem II (PSII). PSII is a light-driven water:plastoquinone oxidoreductase that uses light energy to abstract electrons from H(2)O, generating O(2) and a proton gradient subsequently used for ATP formation. It consists of a core antenna complex that captures photons, and an electron transfer chain that converts photonic excitation into a charge separation. The protein is Photosystem II reaction center protein K of Cyanophora paradoxa.